A 188-amino-acid polypeptide reads, in one-letter code: Protein salivary glands marred (188 aa).

This sequence belongs to the TNFAIP8 family. In terms of assembly, interacts with the Ste20-like MAP kinase msn.

It localises to the cytoplasm. It is found in the cytoskeleton. In terms of biological role, important for modulating JNK signaling, cytoskeletal remodeling and autophagy in larval salivary glands. During salivary gland development, involved in the positive regulation of the JNK signaling pathway, acting downstream of the TNF ligand egr and upstream of bsk. The chain is Protein salivary glands marred from Drosophila melanogaster (Fruit fly).